The following is a 55-amino-acid chain: MAKGIREKIKLESTAGTGHFYTTTKNKRNMPEKMLIKKFDPVARKHVDYKETKLK.

It belongs to the bacterial ribosomal protein bL33 family.

The polypeptide is Large ribosomal subunit protein bL33 (Bordetella avium (strain 197N)).